A 211-amino-acid polypeptide reads, in one-letter code: GATA transcription factor 19 (211 aa).

A GATA-type zinc finger spans residues 77 to 102 (CANCDTTSTPLWRNGPRGPKSLCNAC). The interval 111 to 131 (RRASTARNSTSGGGSTAAGVP) is disordered.

This sequence belongs to the type IV zinc-finger family. Class B subfamily. As to quaternary structure, forms heterodimers with GATA18.

It is found in the nucleus. Its function is as follows. Transcriptional regulator that specifically binds 5'-GATA-3' or 5'-GAT-3' motifs within gene promoters. Regulates both flower and shoot apical meristem (SAM) development, especially for establishing organ boundaries in shoots and flowers, probably by controlling the number and position of WUS-expressing cells. This chain is GATA transcription factor 19, found in Arabidopsis thaliana (Mouse-ear cress).